The sequence spans 71 residues: Delta-actitoxin-Avd2b 2 (71 aa).

A signal peptide spans 1–20; that stretch reads MNRLLVFLMLGAAFMLVVSA. Residues 21–41 constitute a propeptide that is removed on maturation; that stretch reads NDAYGDEPAFKDLNQGDESLG. 3 cysteine pairs are disulfide-bonded: cysteine 46-cysteine 61, cysteine 47-cysteine 55, and cysteine 49-cysteine 66.

Belongs to the sea anemone short toxin (type III) family.

Its subcellular location is the secreted. The protein localises to the nematocyst. In terms of biological role, voltage-gated sodium channel (Nav) inhibitor. 1 uM completely inhibits insect voltage-gated sodium channel inactivation (DmNav1 from D.melanogaster). The chain is Delta-actitoxin-Avd2b 2 from Anemonia viridis (Snakelocks anemone).